The primary structure comprises 79 residues: Acyl carrier protein (79 aa).

Residues 3–78 (QEILEKVRSI…DAVSYIQEKK (76 aa)) form the Carrier domain. S38 is subject to O-(pantetheine 4'-phosphoryl)serine.

It belongs to the acyl carrier protein (ACP) family. Post-translationally, 4'-phosphopantetheine is transferred from CoA to a specific serine of apo-ACP by AcpS. This modification is essential for activity because fatty acids are bound in thioester linkage to the sulfhydryl of the prosthetic group.

Its subcellular location is the cytoplasm. Its pathway is lipid metabolism; fatty acid biosynthesis. Its function is as follows. Carrier of the growing fatty acid chain in fatty acid biosynthesis. This is Acyl carrier protein from Synechococcus sp. (strain RCC307).